Reading from the N-terminus, the 254-residue chain is Cytokine-inducible SH2-containing protein (254 aa).

One can recognise an SH2 domain in the interval 82 to 188; sequence WYWGSITASE…ATTPALPTPK (107 aa). Positions 171 to 195 are disordered; that stretch reads TRSDSPDLATTPALPTPKEDAPGDP. In terms of domain architecture, SOCS box spans 205–253; it reads KLVQPFVRRSSTRSLQHLCRLVINRLVVDVDCLPLPRRMADYLRQYPFQ.

Stably associated with the tyrosine-phosphorylated IL3 receptor beta chain and tyrosine-phosphorylated EPO receptor (EPOR).

It functions in the pathway protein modification; protein ubiquitination. In terms of biological role, SOCS family proteins form part of a classical negative feedback system that regulates cytokine signal transduction. CIS is involved in the negative regulation of cytokines that signal through the JAK-STAT5 pathway such as erythropoietin, prolactin and interleukin 3 (IL3) receptor. Inhibits STAT5 trans-activation by suppressing its tyrosine phosphorylation. May be a substrate recognition component of a SCF-like ECS (Elongin BC-CUL2/5-SOCS-box protein) E3 ubiquitin-protein ligase complex which mediates the ubiquitination and subsequent proteasomal degradation of target proteins. This chain is Cytokine-inducible SH2-containing protein (CISH), found in Bos taurus (Bovine).